The chain runs to 98 residues: Aspartyl/glutamyl-tRNA(Asn/Gln) amidotransferase subunit C (98 aa).

It belongs to the GatC family. In terms of assembly, heterotrimer of A, B and C subunits.

It catalyses the reaction L-glutamyl-tRNA(Gln) + L-glutamine + ATP + H2O = L-glutaminyl-tRNA(Gln) + L-glutamate + ADP + phosphate + H(+). The catalysed reaction is L-aspartyl-tRNA(Asn) + L-glutamine + ATP + H2O = L-asparaginyl-tRNA(Asn) + L-glutamate + ADP + phosphate + 2 H(+). Its function is as follows. Allows the formation of correctly charged Asn-tRNA(Asn) or Gln-tRNA(Gln) through the transamidation of misacylated Asp-tRNA(Asn) or Glu-tRNA(Gln) in organisms which lack either or both of asparaginyl-tRNA or glutaminyl-tRNA synthetases. The reaction takes place in the presence of glutamine and ATP through an activated phospho-Asp-tRNA(Asn) or phospho-Glu-tRNA(Gln). In Gloeothece citriformis (strain PCC 7424) (Cyanothece sp. (strain PCC 7424)), this protein is Aspartyl/glutamyl-tRNA(Asn/Gln) amidotransferase subunit C.